The following is a 495-amino-acid chain: Cornulin (495 aa).

Residues 49–84 (HDPATVDEVLRLLDEDHTGTVEFKEFLVLVFKVAQA) form the EF-hand domain. Ca(2+)-binding residues include Asp62, Asp64, Thr66, Thr68, and Glu73. Disordered regions lie at residues 96-439 (ACGS…TVVG) and 460-481 (LHTSVSSAQGQDAAQSEEKRGI). A compositionally biased stretch (polar residues) spans 99-110 (SQESGSLHSGAS). Low complexity predominate over residues 137–151 (HRQSQQGSRGQNRPG). Polar residues predominate over residues 152–194 (VQTQGQATGSAWVSSYDRQAESQSQERISPQIQLSGQTEQTQK). A compositionally biased stretch (basic and acidic residues) spans 196 to 222 (GEGKRNQTTEMRPERQPQTREQDRAHQ). Residues 226 to 242 (TVTGSGTQTQAGATQTV) show a composition bias toward low complexity. Composition is skewed to polar residues over residues 243-282 (EQDSSHQTGRTSKQTQEATNDQNRGTETHGQGRSQTSQAV) and 290-303 (QAGTHTQTPTQTVE). A compositionally biased stretch (low complexity) spans 307-324 (SHQTGSTSTQTQESTNGQ). The segment covering 334-355 (GRSQTSQAVTGGHTQIQAGSHT) has biased composition (polar residues). Residues 374 to 385 (QGQTQTQPGSGQ) are compositionally biased toward low complexity. Polar residues-rich tracts occupy residues 403 to 420 (QAQTGASTESGRQEWSST) and 460 to 473 (LHTSVSSAQGQDAA).

This sequence belongs to the S100-fused protein family. Homodimer. In terms of tissue distribution, expressed in the basal skin layer (at protein level). Squamous epithelia cell-specific. Expressed in the esophagus (periphery of the cells of the granular and the upper spinous layers), foreskin (granular and lower cornified cells), scalp skin (granular layer), inner root sheath of the hair follicle and in primary keratinocytes (at protein level). Expressed in the squamous epithelium of the cervix, esophagus, foreskin and larynx. Expressed in the fetal bladder and scalp skin. Expressed at very low levels in the lung, kidney, uterus, skeletal muscle, heart and fetal brain. Undetectable or barely detectable in esophageal and oral squamous cell carcinoma compared with the matched adjacent normal esophageal mucosa. Undetectable or barely detectable in larynx and esophagus from patients with pH-documented laryngopharyngeal reflux (LPR).

It localises to the cytoplasm. In terms of biological role, promotes cell proliferation, G1/S cell cycle progression and induces expression of the cell cycle regulator CCND1. Regulates proliferation induced by pro-inflammatory cytokine response via activation of NFKB1 and PI3K/AKT signaling pathways. This Homo sapiens (Human) protein is Cornulin (CRNN).